Here is a 461-residue protein sequence, read N- to C-terminus: CBL-interacting protein kinase 1 (461 aa).

The 256-residue stretch at 19–274 (YEIGRTLGEG…IAGIKEHEWF (256 aa)) folds into the Protein kinase domain. Residues 25–33 (LGEGNFGKV) and Lys48 contribute to the ATP site. The active-site Proton acceptor is the Asp142. The activation loop stretch occupies residues 160-189 (DFGLSALPQHLGNDGLLHTTCGSPNYIAPE). The region spanning 308 to 332 (EKPTHINAFQLIGMASALDLSGFFE) is the NAF domain. The interval 338 to 367 (QRKIRFTSTHSPKDLFDKIENVVTEMGFQV) is PPI.

The protein belongs to the protein kinase superfamily. CAMK Ser/Thr protein kinase family. SNF1 subfamily. Mn(2+) is required as a cofactor.

It carries out the reaction L-seryl-[protein] + ATP = O-phospho-L-seryl-[protein] + ADP + H(+). It catalyses the reaction L-threonyl-[protein] + ATP = O-phospho-L-threonyl-[protein] + ADP + H(+). CIPK serine-threonine protein kinases interact with CBL proteins. Binding of a CBL protein to the regulatory NAF domain of CIPK protein lead to the activation of the kinase in a calcium-dependent manner. This chain is CBL-interacting protein kinase 1 (CIPK1), found in Oryza sativa subsp. japonica (Rice).